The chain runs to 148 residues: Macrodomain Ter protein (148 aa).

Belongs to the MatP family. As to quaternary structure, homodimer.

Its subcellular location is the cytoplasm. Required for spatial organization of the terminus region of the chromosome (Ter macrodomain) during the cell cycle. Prevents early segregation of duplicated Ter macrodomains during cell division. Binds specifically to matS, which is a 13 bp signature motif repeated within the Ter macrodomain. In Photobacterium profundum (strain SS9), this protein is Macrodomain Ter protein.